A 137-amino-acid chain; its full sequence is Small ribosomal subunit protein uS12 (137 aa).

The disordered stretch occupies residues 1–20 (MPTTNQLVNRGRTSKVQKQN). 3-methylthioaspartic acid is present on aspartate 102.

Belongs to the universal ribosomal protein uS12 family. Part of the 30S ribosomal subunit. Contacts proteins S8 and S17. May interact with IF1 in the 30S initiation complex.

In terms of biological role, with S4 and S5 plays an important role in translational accuracy. Its function is as follows. Interacts with and stabilizes bases of the 16S rRNA that are involved in tRNA selection in the A site and with the mRNA backbone. Located at the interface of the 30S and 50S subunits, it traverses the body of the 30S subunit contacting proteins on the other side and probably holding the rRNA structure together. The combined cluster of proteins S8, S12 and S17 appears to hold together the shoulder and platform of the 30S subunit. The polypeptide is Small ribosomal subunit protein uS12 (Mycoplasmopsis synoviae (strain 53) (Mycoplasma synoviae)).